A 95-amino-acid chain; its full sequence is Acylphosphatase (95 aa).

Positions 7 to 93 (TWQLFAHGRV…QLFDRFDWLP (87 aa)) constitute an Acylphosphatase-like domain. Catalysis depends on residues arginine 22 and asparagine 40.

It belongs to the acylphosphatase family.

The catalysed reaction is an acyl phosphate + H2O = a carboxylate + phosphate + H(+). The chain is Acylphosphatase (acyP) from Cupriavidus metallidurans (strain ATCC 43123 / DSM 2839 / NBRC 102507 / CH34) (Ralstonia metallidurans).